Here is a 353-residue protein sequence, read N- to C-terminus: C-X-C chemokine receptor type 4 (353 aa).

The tract at residues 1–22 is important for chemokine binding and signaling; sequence MEGIRIFTSDNYTEDDLGSGDY. Topologically, residues 1–39 are extracellular; that stretch reads MEGIRIFTSDNYTEDDLGSGDYDSMKEPCFREENAHFNR. The N-linked (GlcNAc...) asparagine glycan is linked to Asn-11. Tyr-12 carries the post-translational modification Sulfotyrosine. O-linked (Xyl...) (chondroitin sulfate) serine glycosylation is present at Ser-19. Tyr-22 bears the Sulfotyrosine mark. 2 disulfides stabilise this stretch: Cys-29/Cys-275 and Cys-110/Cys-187. Residues 40–64 traverse the membrane as a helical segment; it reads IFLPTVYSIIFLTGIVGNGLVILVM. At 65–78 the chain is on the cytoplasmic side; that stretch reads GYQKKLRSMTDKYR. The helical transmembrane segment at 79–100 threads the bilayer; that stretch reads LHLSVADLLFVLTLPFWAVDAV. Residues 95-98 form a chemokine binding region; the sequence is WAVD. Topologically, residues 101-111 are extracellular; that stretch reads ANWYFGKFLCK. Residues 112–131 traverse the membrane as a helical segment; sequence AVHVIYTVNLYSSVLILAFI. A chemokine binding region spans residues 114-118; the sequence is HVIYT. Residues 132–155 are Cytoplasmic-facing; sequence SLDRYLAIVHATNSQKPRKLLAEK. Positions 134 to 136 match the Important for signaling motif; sequence DRY. The tract at residues 136 to 148 is involved in dimerization; when bound to chemokine; sequence YLAIVHATNSQKP. The helical transmembrane segment at 156 to 175 threads the bilayer; it reads VVYVGVWLPAVLLTIPDLIF. The Extracellular segment spans residues 176–196; it reads ADIKEVDERYICDRFYPSDLW. Positions 187-191 are chemokine binding, important for signaling; that stretch reads CDRFY. Residues 192-211 form an involved in dimerization region; it reads PSDLWLVVFQFQHIVVGLLL. Residues 197–217 form a helical membrane-spanning segment; it reads LVVFQFQHIVVGLLLPGIVIL. Topologically, residues 218–242 are cytoplasmic; the sequence is SCYCIIISKLSHSKGYQKRKALKTT. A helical transmembrane segment spans residues 243 to 262; sequence VILILTFFACWLPYYIGISI. Residues 263–283 are Extracellular-facing; sequence DSFILLEIIQQGCEFESTVHK. The segment at 267–269 is involved in dimerization; the sequence is LLE. A helical transmembrane segment spans residues 284 to 303; that stretch reads WISITEALAFFHCCLNPILY. Residues 304–353 are Cytoplasmic-facing; that stretch reads AFLGAKFKTSAQHALTSVSRGSSLKILSKGKRGGHSSVSTESESSSFHSS. Ser-320 and Ser-322 each carry phosphoserine. Phosphoserine; by PKC and GRK6 is present on residues Ser-325 and Ser-326. The segment at 330-353 is disordered; it reads LSKGKRGGHSSVSTESESSSFHSS. The residue at position 331 (Ser-331) is a Phosphoserine; by GRK6. Lys-332 participates in a covalent cross-link: Glycyl lysine isopeptide (Lys-Gly) (interchain with G-Cter in ubiquitin). A compositionally biased stretch (low complexity) spans 338–353; the sequence is HSSVSTESESSSFHSS. Ser-340 is subject to Phosphoserine; by GRK6. Phosphoserine is present on residues Ser-349 and Ser-352.

The protein belongs to the G-protein coupled receptor 1 family. Monomer. Can form homodimers. Interacts with CD164. Interacts with ARRB2; the interaction is dependent on the C-terminal phosphorylation of CXCR4 and allows activation of MAPK1 and MAPK3. Interacts with ARR3; the interaction is dependent on the C-terminal phosphorylation of CXCR4 and modulates calcium mobilization. Interacts with RNF113A; the interaction, enhanced by CXCL12, promotes CXCR4 ubiquitination and subsequent degradation. Interacts (via the cytoplasmic C-terminal) with ITCH (via the WW domains I and II); the interaction, enhanced by CXCL12, promotes CXCR4 ubiquitination and leads to its degradation. Interacts with extracellular ubiquitin. Interacts with DBN1; this interaction is enhanced by antigenic stimulation. Following LPS binding, may form a complex with GDF5, HSP90AA1 and HSPA8. Post-translationally, phosphorylated on agonist stimulation. Rapidly phosphorylated on serine and threonine residues in the C-terminal. Phosphorylation at Ser-325 and Ser-326 leads to recruitment of ITCH, ubiquitination and protein degradation. Ubiquitinated after ligand binding, leading to its degradation. Ubiquitinated by ITCH at the cell membrane on agonist stimulation. The ubiquitin-dependent mechanism, endosomal sorting complex required for transport (ESCRT), then targets CXCR4 for lysosomal degradation. This process is dependent also on prior Ser-/Thr-phosphorylation in the C-terminal of CXCR4. Also binding of ARRB1 to STAM negatively regulates CXCR4 sorting to lysosomes though modulating ubiquitination of SFR5S. In terms of processing, sulfation is required for efficient binding of CXCL12/SDF-1alpha and promotes its dimerization. Post-translationally, O- and N-glycosylated. N-glycosylation can mask coreceptor function. The O-glycosylation chondroitin sulfate attachment does not affect interaction with CXCL12/SDF-1alpha nor its coreceptor activity. As to expression, brain, heart, kidney, lung and liver.

It is found in the cell membrane. The protein localises to the cell junction. It localises to the early endosome. Its subcellular location is the late endosome. The protein resides in the lysosome. Receptor for the C-X-C chemokine CXCL12/SDF-1 that transduces a signal by increasing intracellular calcium ion levels and enhancing MAPK1/MAPK3 activation. Involved in the AKT signaling cascade. Plays a role in regulation of cell migration, e.g. during wound healing. Acts as a receptor for extracellular ubiquitin; leading to enhanced intracellular calcium ions and reduced cellular cAMP levels. Binds bacterial lipopolysaccharide (LPS) et mediates LPS-induced inflammatory response, including TNF secretion by monocytes. Involved in hematopoiesis and in cardiac ventricular septum formation. Also plays an essential role in vascularization of the gastrointestinal tract, probably by regulating vascular branching and/or remodeling processes in endothelial cells. Involved in cerebellar development. In the CNS, could mediate hippocampal-neuron survival. The polypeptide is C-X-C chemokine receptor type 4 (CXCR4) (Bos taurus (Bovine)).